The sequence spans 125 residues: Fluoride-specific ion channel FluC (125 aa).

Helical transmembrane passes span 4–24 (VIYV…VGIV), 32–52 (FLPW…GLFA), 68–88 (LLIT…LDTV), and 100–120 (AFYV…GLAV). Gly-75 and Thr-78 together coordinate Na(+).

It belongs to the fluoride channel Fluc/FEX (TC 1.A.43) family.

The protein localises to the cell inner membrane. The catalysed reaction is fluoride(in) = fluoride(out). With respect to regulation, na(+) is not transported, but it plays an essential structural role and its presence is essential for fluoride channel function. Functionally, fluoride-specific ion channel. Important for reducing fluoride concentration in the cell, thus reducing its toxicity. This chain is Fluoride-specific ion channel FluC, found in Allorhizobium ampelinum (strain ATCC BAA-846 / DSM 112012 / S4) (Agrobacterium vitis (strain S4)).